Consider the following 612-residue polypeptide: Indole-3-acetic acid-amido synthetase GH3.5 (612 aa).

It belongs to the IAA-amido conjugating enzyme family.

In terms of biological role, catalyzes the synthesis of indole-3-acetic acid (IAA)-amino acid conjugates, providing a mechanism for the plant to cope with the presence of excess auxin. Strongly reactive with Glu, Gln, Trp, Asp, Ala, Leu, Phe, Gly, Tyr, Met, Ile and Val. Little or no product formation with His, Ser, Thr, Arg, Lys, or Cys. Also active on pyruvic and butyric acid analogs of IAA, PAA and the synthetic auxin naphthaleneacetic acid (NAA). The two chlorinated synthetic auxin herbicides 2,4-D and 3,6-dichloro-o-anisic acid (dicamba) cannot be used as substrates. This Arabidopsis thaliana (Mouse-ear cress) protein is Indole-3-acetic acid-amido synthetase GH3.5 (GH3.5).